Reading from the N-terminus, the 1509-residue chain is DNA polymerase alpha catalytic subunit (1509 aa).

A disordered region spans residues 1-162 (MNRPKREKKS…KKTKEKKNEI (162 aa)). Composition is skewed to basic and acidic residues over residues 21–35 (EQIK…RTDQ) and 42–79 (ERKR…RETS). The stretch at 27–67 (RDGEKRTDQLQEEDDERKRLEQLKEQETEFDKEERKRKNRD) forms a coiled coil. The span at 80–123 (DNEDEDEDEDDDGDNSDDDYSLDEDDEDGGGDGENNDSDQEEAI) shows a compositional bias: acidic residues. A compositionally biased stretch (basic residues) spans 127 to 137 (RKKKRQVKKKS). A compositionally biased stretch (basic and acidic residues) spans 138–147 (KKDENGEPKV). The span at 148–157 (KTPRVKKTKE) shows a compositional bias: basic residues. 2 coiled-coil regions span residues 234–263 (APDS…LLNK) and 958–989 (LHGL…IQQQ). Residues cysteine 1328, cysteine 1331, cysteine 1355, cysteine 1358, cysteine 1389, cysteine 1392, cysteine 1406, and cysteine 1411 each coordinate Zn(2+). The CysA-type zinc-finger motif lies at 1328 to 1358 (CPYCGQNNEFTGIVKIDSEGKSESGFDCNQC). A CysB motif motif is present at residues 1389 to 1411 (CTECEKVSKNYKETSYRCARPQC).

The protein belongs to the DNA polymerase type-B family.

The protein localises to the nucleus. The enzyme catalyses DNA(n) + a 2'-deoxyribonucleoside 5'-triphosphate = DNA(n+1) + diphosphate. Polymerase alpha in a complex with DNA primase is a replicative polymerase. The chain is DNA polymerase alpha catalytic subunit (pola1) from Dictyostelium discoideum (Social amoeba).